Reading from the N-terminus, the 803-residue chain is Translation initiation factor IF-2 (803 aa).

2 disordered regions span residues 95–125 (PVVEQKRETEPAPTQEVPLTSDTTNLNEKAE) and 138–178 (EVKE…EREE). The segment covering 111–121 (VPLTSDTTNLN) has biased composition (polar residues). Basic and acidic residues predominate over residues 138-155 (EVKEEAKKTPSEKKETPK). Positions 156 to 167 (KGPRKETRRSRK) are enriched in basic residues. The span at 168–178 (PDKEDKWEREE) shows a compositional bias: basic and acidic residues. Positions 302–471 (PRAPVVTIMG…LLQAEVLELK (170 aa)) constitute a tr-type G domain. Residues 311–318 (GHVDHGKT) are G1. 311–318 (GHVDHGKT) contacts GTP. A G2 region spans residues 336 to 340 (GITQH). Residues 357–360 (DTPG) form a G3 region. Residues 357-361 (DTPGH) and 411-414 (NKID) contribute to the GTP site. Positions 411–414 (NKID) are G4. Residues 447 to 449 (SAK) form a G5 region.

This sequence belongs to the TRAFAC class translation factor GTPase superfamily. Classic translation factor GTPase family. IF-2 subfamily.

It is found in the cytoplasm. One of the essential components for the initiation of protein synthesis. Protects formylmethionyl-tRNA from spontaneous hydrolysis and promotes its binding to the 30S ribosomal subunits. Also involved in the hydrolysis of GTP during the formation of the 70S ribosomal complex. This Coxiella burnetii (strain RSA 331 / Henzerling II) protein is Translation initiation factor IF-2.